A 181-amino-acid chain; its full sequence is Adenine phosphoribosyltransferase (181 aa).

It belongs to the purine/pyrimidine phosphoribosyltransferase family. In terms of assembly, homodimer.

Its subcellular location is the cytoplasm. The enzyme catalyses AMP + diphosphate = 5-phospho-alpha-D-ribose 1-diphosphate + adenine. It functions in the pathway purine metabolism; AMP biosynthesis via salvage pathway; AMP from adenine: step 1/1. Catalyzes a salvage reaction resulting in the formation of AMP, that is energically less costly than de novo synthesis. This Methylobacterium sp. (strain 4-46) protein is Adenine phosphoribosyltransferase.